The following is a 107-amino-acid chain: Putative antitoxin VapB5 (107 aa).

2 consecutive transmembrane segments (helical) span residues 3-23 and 65-85; these read GPVIIPLISTLGLSFLAILLA and LIILTPALTWSLTALSMAYLY.

It is found in the cell membrane. Its function is as follows. Possibly the antitoxin component of a type II toxin-antitoxin (TA) system. Its cognate toxin is VapC5 (Potential). In Methanocaldococcus jannaschii (strain ATCC 43067 / DSM 2661 / JAL-1 / JCM 10045 / NBRC 100440) (Methanococcus jannaschii), this protein is Putative antitoxin VapB5 (vapB5).